Reading from the N-terminus, the 503-residue chain is Probable Xaa-Pro aminopeptidase TSTA_094700 (503 aa).

Positions 277, 288, 428, and 467 each coordinate Mn(2+).

This sequence belongs to the peptidase M24B family. The cofactor is Mn(2+).

It carries out the reaction Release of any N-terminal amino acid, including proline, that is linked to proline, even from a dipeptide or tripeptide.. Its function is as follows. Catalyzes the removal of a penultimate prolyl residue from the N-termini of peptides. The chain is Probable Xaa-Pro aminopeptidase TSTA_094700 from Talaromyces stipitatus (strain ATCC 10500 / CBS 375.48 / QM 6759 / NRRL 1006) (Penicillium stipitatum).